Consider the following 101-residue polypeptide: Small ribosomal subunit protein uS14 (101 aa).

The protein belongs to the universal ribosomal protein uS14 family. In terms of assembly, part of the 30S ribosomal subunit. Contacts proteins S3 and S10.

In terms of biological role, binds 16S rRNA, required for the assembly of 30S particles and may also be responsible for determining the conformation of the 16S rRNA at the A site. The protein is Small ribosomal subunit protein uS14 of Citrobacter koseri (strain ATCC BAA-895 / CDC 4225-83 / SGSC4696).